Reading from the N-terminus, the 415-residue chain is D-serine dehydratase (415 aa).

K68 carries the N6-(pyridoxal phosphate)lysine modification. Pyridoxal 5'-phosphate-binding residues include Y204, Y211, T253, G279, and N280. Zn(2+) contacts are provided by H385 and C387.

This sequence belongs to the DSD1 family. Homodimer. Requires pyridoxal 5'-phosphate as cofactor. The cofactor is Zn(2+).

It localises to the cytoplasm. The protein localises to the nucleus. It catalyses the reaction D-serine = pyruvate + NH4(+). Functionally, catalyzes the conversion of D-serine to pyruvate and ammonia. May play a role in D-serine detoxification. The protein is D-serine dehydratase of Schizosaccharomyces pombe (strain 972 / ATCC 24843) (Fission yeast).